We begin with the raw amino-acid sequence, 610 residues long: tRNA uridine 5-carboxymethylaminomethyl modification enzyme MnmG (610 aa).

FAD is bound at residue 14–19; sequence GAGHAG. NAD(+) is bound at residue 274-288; that stretch reads GPRYCPSIEDKIVKF.

It belongs to the MnmG family. In terms of assembly, homodimer. Heterotetramer of two MnmE and two MnmG subunits. It depends on FAD as a cofactor.

Its subcellular location is the cytoplasm. In terms of biological role, NAD-binding protein involved in the addition of a carboxymethylaminomethyl (cmnm) group at the wobble position (U34) of certain tRNAs, forming tRNA-cmnm(5)s(2)U34. This is tRNA uridine 5-carboxymethylaminomethyl modification enzyme MnmG from Chlamydia trachomatis serovar L2b (strain UCH-1/proctitis).